Here is a 483-residue protein sequence, read N- to C-terminus: Glutamyl-tRNA(Gln) amidotransferase subunit A (483 aa).

Active-site charge relay system residues include K75 and S150. S174 (acyl-ester intermediate) is an active-site residue.

This sequence belongs to the amidase family. GatA subfamily. Heterotrimer of A, B and C subunits.

The enzyme catalyses L-glutamyl-tRNA(Gln) + L-glutamine + ATP + H2O = L-glutaminyl-tRNA(Gln) + L-glutamate + ADP + phosphate + H(+). Functionally, allows the formation of correctly charged Gln-tRNA(Gln) through the transamidation of misacylated Glu-tRNA(Gln) in organisms which lack glutaminyl-tRNA synthetase. The reaction takes place in the presence of glutamine and ATP through an activated gamma-phospho-Glu-tRNA(Gln). This Gloeothece citriformis (strain PCC 7424) (Cyanothece sp. (strain PCC 7424)) protein is Glutamyl-tRNA(Gln) amidotransferase subunit A.